The sequence spans 227 residues: Izumo sperm-egg fusion protein 4 (227 aa).

The signal sequence occupies residues 1–24; sequence MFGQGRLGQAMALLLFLGMTAALA. N-linked (GlcNAc...) asparagine glycosylation is found at N153 and N214.

It belongs to the Izumo family.

It localises to the secreted. In Mus musculus (Mouse), this protein is Izumo sperm-egg fusion protein 4 (Izumo4).